The primary structure comprises 604 residues: Pescadillo homolog (604 aa).

Residues 275–299 (NSEPAGLIEDKEGEDNKESSKTDES) are disordered. Residues 282–299 (IEDKEGEDNKESSKTDES) are compositionally biased toward basic and acidic residues. Residues 337-427 (ECRSLFKNLK…IILPTEGYIV (91 aa)) enclose the BRCT domain. Disordered regions lie at residues 518–557 (KTFSNRTADNQPDVVDKSDTKEADDHMEDSHKQAEKDAAD) and 574–604 (IEINQERKKDKVNLLKKRKKNADSSASAKGR). Basic and acidic residues-rich tracts occupy residues 531–557 (VVDKSDTKEADDHMEDSHKQAEKDAAD) and 577–586 (NQERKKDKVN).

Belongs to the pescadillo family.

The protein localises to the nucleus. It localises to the nucleolus. It is found in the nucleoplasm. Functionally, required for maturation of ribosomal RNAs and formation of the large ribosomal subunit. This Oryza sativa subsp. japonica (Rice) protein is Pescadillo homolog (PES).